Consider the following 347-residue polypeptide: 3-methyl-2-oxobutanoate hydroxymethyltransferase 1, mitochondrial (347 aa).

The transit peptide at 1-48 (MASSLTRNCSRFSKAISVRFMSNLPENTVYGGPKPQNPNQRVTLTHLR) directs the protein to the mitochondrion. D83 and D122 together coordinate Mg(2+). 3-methyl-2-oxobutanoate-binding positions include 83–84 (DS), D122, and K152. Residue E154 participates in Mg(2+) binding. The active-site Proton acceptor is E222.

It belongs to the PanB family. Mg(2+) is required as a cofactor.

Its subcellular location is the mitochondrion. The enzyme catalyses 3-methyl-2-oxobutanoate + (6R)-5,10-methylene-5,6,7,8-tetrahydrofolate + H2O = 2-dehydropantoate + (6S)-5,6,7,8-tetrahydrofolate. Its pathway is cofactor biosynthesis; (R)-pantothenate biosynthesis; (R)-pantoate from 3-methyl-2-oxobutanoate: step 1/2. Catalyzes the reversible reaction in which hydroxymethyl group from 5,10-methylenetetrahydrofolate is transferred onto alpha-ketoisovalerate to form ketopantoate. This is 3-methyl-2-oxobutanoate hydroxymethyltransferase 1, mitochondrial (KPHMT1) from Arabidopsis thaliana (Mouse-ear cress).